The chain runs to 737 residues: Polyribonucleotide nucleotidyltransferase (737 aa).

Mg(2+)-binding residues include D489 and D495. The region spanning 556 to 615 is the KH domain; that stretch reads PKIDTIKIDVDKIKIVIGKGGETIDKIIAETGVKIDIDEEGNVSIYSSDQDAINRAKEII. In terms of domain architecture, S1 motif spans 625 to 693; it reads DEVYRAKVVR…EKGRVDASMK (69 aa). The tract at residues 691 to 737 is disordered; the sequence is SMKALLPRPPKPERDEKGEKSERPYRPRHHKDHKPKKEITETPKDSE. 2 stretches are compositionally biased toward basic and acidic residues: residues 700–715 and 725–737; these read PKPE…ERPY and PKKE…KDSE.

The protein belongs to the polyribonucleotide nucleotidyltransferase family. Requires Mg(2+) as cofactor.

The protein resides in the cytoplasm. The enzyme catalyses RNA(n+1) + phosphate = RNA(n) + a ribonucleoside 5'-diphosphate. Its function is as follows. Involved in mRNA degradation. Catalyzes the phosphorolysis of single-stranded polyribonucleotides processively in the 3'- to 5'-direction. The protein is Polyribonucleotide nucleotidyltransferase of Streptococcus pneumoniae (strain Hungary19A-6).